A 114-amino-acid polypeptide reads, in one-letter code: U17-barytoxin-Tl1a (114 aa).

Residues methionine 1–alanine 20 form the signal peptide. The propeptide occupies asparagine 21–arginine 74. Disulfide bonds link cysteine 75-cysteine 88, cysteine 82-cysteine 93, and cysteine 87-cysteine 108.

It belongs to the neurotoxin 14 (magi-1) family. 03 (ICK-30-40) subfamily. As to expression, expressed by the venom gland.

The protein localises to the secreted. Functionally, ion channel inhibitor. This Trittame loki (Brush-footed trapdoor spider) protein is U17-barytoxin-Tl1a.